Reading from the N-terminus, the 351-residue chain is Phosphate acyltransferase (351 aa).

This sequence belongs to the PlsX family. In terms of assembly, homodimer. Probably interacts with PlsY.

The protein localises to the cytoplasm. It catalyses the reaction a fatty acyl-[ACP] + phosphate = an acyl phosphate + holo-[ACP]. It functions in the pathway lipid metabolism; phospholipid metabolism. Its function is as follows. Catalyzes the reversible formation of acyl-phosphate (acyl-PO(4)) from acyl-[acyl-carrier-protein] (acyl-ACP). This enzyme utilizes acyl-ACP as fatty acyl donor, but not acyl-CoA. The protein is Phosphate acyltransferase of Paramagnetospirillum magneticum (strain ATCC 700264 / AMB-1) (Magnetospirillum magneticum).